Consider the following 236-residue polypeptide: uncharacterized protein (236 aa).

Residues 1-73 form a disordered region; that stretch reads MEPGGSENAA…GGGWGWGNTQ (73 aa).

This is an uncharacterized protein from Homo sapiens (Human).